A 351-amino-acid chain; its full sequence is Quinolinate phosphoribosyltransferase [decarboxylating] 2, mitochondrial (351 aa).

Substrate contacts are provided by residues R142, 173–175 (TRK), R197, K207, E240, D267, 299–301 (SGN), and 320–322 (SGA).

This sequence belongs to the NadC/ModD family.

It localises to the mitochondrion. The catalysed reaction is nicotinate beta-D-ribonucleotide + CO2 + diphosphate = quinolinate + 5-phospho-alpha-D-ribose 1-diphosphate + 2 H(+). It participates in alkaloid biosynthesis; nicotine biosynthesis. Its pathway is cofactor biosynthesis; NAD(+) biosynthesis; nicotinate D-ribonucleotide from quinolinate: step 1/1. In terms of biological role, involved in the biosynthesis of pyridine alkaloid natural products, leading mainly to the production of anabasine, anatabine, nicotine and nornicotine, effective deterrents against herbivores with antiparasitic and pesticide properties (neurotoxins); nornicotine serves as the precursor in the synthesis of the carcinogen compound N'-nitrosonornicotine (NNN). Involved in the catabolism of quinolinic acid (QA). The sequence is that of Quinolinate phosphoribosyltransferase [decarboxylating] 2, mitochondrial from Nicotiana glauca (Glaucous tobacco).